The sequence spans 404 residues: Cytochrome b (404 aa).

4 consecutive transmembrane segments (helical) span residues 35–55 (FGSLAGLCLVIQILTGVFLAM), 79–101 (WLLRYMHANGASMFFIVVYLHFF), 116–136 (VWCLGVVILLLMIVTAFIGYV), and 182–202 (FFSLHYLLPFIIAGASILHLA). Positions 85 and 99 each coordinate heme b. Heme b is bound by residues His186 and His200. His205 lines the a ubiquinone pocket. A run of 4 helical transmembrane segments spans residues 228 to 248 (IYVKDLVGWVAFAIFFSIFVF), 292 to 312 (LGGVAAIGLVFVSLLALPFIN), 324 to 344 (IHQKFFWLLVADCLLLGWIGC), and 351 to 370 (YVTIGQIASVGFFFYFAITP).

It belongs to the cytochrome b family. The main subunits of complex b-c1 are: cytochrome b, cytochrome c1 and the Rieske protein. Heme b is required as a cofactor.

Its subcellular location is the mitochondrion inner membrane. Its function is as follows. Component of the ubiquinol-cytochrome c reductase complex (complex III or cytochrome b-c1 complex) that is part of the mitochondrial respiratory chain. The b-c1 complex mediates electron transfer from ubiquinol to cytochrome c. Contributes to the generation of a proton gradient across the mitochondrial membrane that is then used for ATP synthesis. This chain is Cytochrome b (MT-CYB), found in Marchantia polymorpha (Common liverwort).